Consider the following 102-residue polypeptide: Vesicle-associated membrane protein 5 (102 aa).

At 1–72 (MAGKELERCQ…RWENIRCRVY (72 aa)) the chain is on the cytoplasmic side. The 61-residue stretch at 5–65 (ELERCQRQAD…KTLAQQKRWE (61 aa)) folds into the v-SNARE coiled-coil homology domain. Residues Ser41, Ser48, and Ser49 each carry the phosphoserine modification. Residues 73-93 (LGLAVAGGLLLILVVLLVIFL) traverse the membrane as a helical; Anchor for type IV membrane protein segment. Residues 94–102 (PSGEDSSKP) are Vesicular-facing.

Belongs to the synaptobrevin family.

It localises to the cell membrane. The protein resides in the endomembrane system. The protein localises to the golgi apparatus. It is found in the trans-Golgi network membrane. Functionally, may participate in trafficking events that are associated with myogenesis, such as myoblast fusion and/or GLUT4 trafficking. The protein is Vesicle-associated membrane protein 5 (Vamp5) of Rattus norvegicus (Rat).